The following is a 347-amino-acid chain: Microfibril-associated glycoprotein 3 (347 aa).

A signal peptide spans 1-22 (MKLHYCLCILLVVTFVPTALVL). Topologically, residues 23–139 (EDVTPLGTNQ…TLRVIFTSGD (117 aa)) are extracellular. Asn-31, Asn-36, Asn-63, and Asn-103 each carry an N-linked (GlcNAc...) asparagine glycan. The 84-residue stretch at 47-130 (AGSYSGDDVI…SPTRASYSVT (84 aa)) folds into the Ig-like C2-type domain. Cys-68 and Cys-117 form a disulfide bridge. The chain crosses the membrane as a helical span at residues 140–160 (MSVYYMVVCLIAFTITLILNV). Over 161–347 (TRLCLMSTHL…SAEGSTHHRE (187 aa)) the chain is Cytoplasmic. Residues 280–347 (NPELGRSNSP…SAEGSTHHRE (68 aa)) are disordered. A compositionally biased stretch (polar residues) spans 311–331 (VHLQSETKSIGTDSQDSSHFS).

Post-translationally, glycosylated.

The protein resides in the cell membrane. Functionally, component of the elastin-associated microfibrils. This Rattus norvegicus (Rat) protein is Microfibril-associated glycoprotein 3 (Mfap3).